A 261-amino-acid chain; its full sequence is uncharacterized protein (261 aa).

This is an uncharacterized protein from Haemophilus influenzae (strain ATCC 51907 / DSM 11121 / KW20 / Rd).